The chain runs to 329 residues: POU domain, class 5, transcription factor 2 (329 aa).

Positions 1–14 are enriched in polar residues; the sequence is MAGRRSSNVFPLSG. The interval 1–24 is disordered; it reads MAGRRSSNVFPLSGNSGGGLEVDT. Residues 107 to 181 enclose the POU-specific domain; the sequence is DVSAIQKEME…LLKMWLEEVD (75 aa). Positions 199–258 form a DNA-binding region, homeobox; the sequence is RKRRRASRERRIGSNLEKLFLQCPEPTPQQISYIAGRLRLQKDLVQVWFSNRSQMGSWPT.

The protein belongs to the POU transcription factor family. Class-5 subfamily. In adult brain, expressed in the olfactory bulb, becoming specifically concentrated in the mitral cell layer. Also found in the pyramidal cell layer of the hippocampus, in the granule cell layer of the cerebellum and in the cortex.

It is found in the nucleus. In terms of biological role, transcription factor that binds preferentially to the octamer motif (5'-ATGTTAAT-3'). May exert a regulatory function in meiotic events that are required for terminal differentiation of male germ cell. This chain is POU domain, class 5, transcription factor 2 (Pou5f2), found in Mus musculus (Mouse).